The sequence spans 502 residues: Glycerate kinase (502 aa).

This sequence belongs to the glycerate kinase type-2 family.

It is found in the cytoplasm. It carries out the reaction (R)-glycerate + ATP = (2R)-3-phosphoglycerate + ADP + H(+). The polypeptide is Glycerate kinase (glyctk) (Danio rerio (Zebrafish)).